The following is a 492-amino-acid chain: 5-taurinomethyluridine-[tRNA] synthase subunit GTPB3, mitochondrial (492 aa).

The transit peptide at methionine 1 to cysteine 20 directs the protein to the mitochondrion. The 5,10-methylenetetrahydrofolate site is built by arginine 52, glutamate 112, and lysine 152. The 168-residue stretch at glycine 249–alanine 416 folds into the TrmE-type G domain. Residues glycine 256–serine 263, glycine 282–aspartate 286, aspartate 303–glycine 306, and asparagine 374–aspartate 377 contribute to the GTP site. Residue asparagine 259 coordinates K(+). Residues serine 263 and threonine 284 each contribute to the Mg(2+) site. Lysine 492 is a binding site for 5,10-methylenetetrahydrofolate.

This sequence belongs to the TRAFAC class TrmE-Era-EngA-EngB-Septin-like GTPase superfamily. TrmE GTPase family. In terms of assembly, homodimer; forms a dimer in the presence of potassium. Interacts with MTO1; forms the GTPBP3-MTO1 complex composed of homodimers of GTPBP3 and MTO1. The cofactor is K(+).

The protein localises to the mitochondrion. It catalyses the reaction GTP + H2O = GDP + phosphate + H(+). Functionally, GTPase component of the GTPBP3-MTO1 complex that catalyzes the 5-taurinomethyluridine (taum(5)U) modification at the 34th wobble position (U34) of mitochondrial tRNAs (mt-tRNAs), which plays a role in mt-tRNA decoding and mitochondrial translation. Taum(5)U formation on mammalian mt-tRNA requires the presence of both GTPBP3-mediated GTPase activity and MTO1 catalytic activity. This chain is 5-taurinomethyluridine-[tRNA] synthase subunit GTPB3, mitochondrial, found in Rattus norvegicus (Rat).